Here is a 525-residue protein sequence, read N- to C-terminus: Peptide chain release factor 3 (525 aa).

The region spanning 11-279 (NKRRTFAIIS…TYLQFAPAPS (269 aa)) is the tr-type G domain. GTP contacts are provided by residues 20 to 27 (SHPDAGKT), 88 to 92 (DTPGH), and 142 to 145 (NKFD).

It belongs to the TRAFAC class translation factor GTPase superfamily. Classic translation factor GTPase family. PrfC subfamily.

The protein resides in the cytoplasm. Functionally, increases the formation of ribosomal termination complexes and stimulates activities of RF-1 and RF-2. It binds guanine nucleotides and has strong preference for UGA stop codons. It may interact directly with the ribosome. The stimulation of RF-1 and RF-2 is significantly reduced by GTP and GDP, but not by GMP. This chain is Peptide chain release factor 3, found in Limosilactobacillus reuteri (strain DSM 20016) (Lactobacillus reuteri).